The sequence spans 551 residues: Membrane protein insertase YidC (551 aa).

A helical membrane pass occupies residues 3–23 (ANHIRILLLVTIAIMLISLMG). A compositionally biased stretch (low complexity) spans 30 to 43 (PSNSSQSQTTQTQQ). The tract at residues 30-61 (PSNSSQSQTTQTQQDNSHYNSDTPATTNVSTS) is disordered. Over residues 44–61 (DNSHYNSDTPATTNVSTS) the composition is skewed to polar residues. The next 3 membrane-spanning stretches (helical) occupy residues 361–381 (LVGNWGLAIILVTCLIKLIFY), 431–451 (LSGCLPMLIQIPIFISLYWVL), and 504–524 (IMMFLPVIFTFLFASFPSGLV).

It belongs to the OXA1/ALB3/YidC family. Type 1 subfamily. In terms of assembly, interacts with the Sec translocase complex via SecD. Specifically interacts with transmembrane segments of nascent integral membrane proteins during membrane integration.

Its subcellular location is the cell inner membrane. In terms of biological role, required for the insertion and/or proper folding and/or complex formation of integral membrane proteins into the membrane. Involved in integration of membrane proteins that insert both dependently and independently of the Sec translocase complex, as well as at least some lipoproteins. Aids folding of multispanning membrane proteins. In Francisella philomiragia subsp. philomiragia (strain ATCC 25017 / CCUG 19701 / FSC 153 / O#319-036), this protein is Membrane protein insertase YidC.